Consider the following 743-residue polypeptide: Ovocleidin-116 (743 aa).

A signal peptide spans 1-18; the sequence is MRATLFCLCLCLLGTVLP. An intrachain disulfide couples Cys-31 to Cys-42. N-linked (GlcNAc...) asparagine glycosylation is present at Asn-62. Residues 68–225 form a disordered region; sequence KEEGDHQGTI…GTMGTGDSAI (158 aa). The span at 129 to 141 shows a compositional bias: polar residues; it reads DSNSVYPTSTSVE. Residues 169 to 179 show a composition bias toward gly residues; the sequence is GPHGDGDGGNG. N-linked (GlcNAc...) asparagine; partial glycosylation is present at Asn-293. 6 disordered regions span residues 333-356, 385-454, 505-534, 549-577, 628-649, and 692-743; these read GDSV…ATEI, SGKG…GPER, ARTQ…QQEV, RHRA…STGG, DPWV…TVAG, and SGVG…RQSL. Residues 402 to 420 are compositionally biased toward low complexity; sequence ATMTTRGGRGTASSGLTTG. The segment covering 421-431 has biased composition (polar residues); sequence DCSTAASTPSR. Residues 549–558 show a composition bias toward basic and acidic residues; that stretch reads RHRARVRPES.

Belongs to the osteoregulin family. In terms of processing, asn-62 is fully glycosylated, whereas only less than 10% of Asn-293 seem to be glycosylated. In terms of tissue distribution, in the eggshell, expressed mainly in the palisade and mammillary layers. Expression also detected in the hypertrophic zone of the epiphyseal growth plate, and in cortical and medullary bone (at protein level). Highly expressed in uterus. Not detected in the proximal oviduct, liver, magnum, duodenum and kidney.

It is found in the secreted. It localises to the extracellular space. The protein localises to the extracellular matrix. Its function is as follows. Major component of the eggshell matrix. May play an important role in the regulation of calcite growth during eggshell calcification. May also regulate the mineralization process in developing and growing bones. This chain is Ovocleidin-116, found in Gallus gallus (Chicken).